The sequence spans 635 residues: BTB/POZ domain and ankyrin repeat-containing protein NPR2 (635 aa).

Residues 97–191 enclose the BTB domain; the sequence is SDADVDVADG…LYTGKLRPAP (95 aa). Over residues 138 to 152 the composition is skewed to gly residues; sequence AAGGGGGGGGGGGER. Positions 138-157 are disordered; the sequence is AAGGGGGGGGGGGERTGGRP. A C2HC NPR-type zinc finger spans residues 194–208; sequence VVSCADPMCPHDSCP. 4 residues coordinate Zn(2+): C197, C202, H204, and C207. ANK repeat units lie at residues 317–347, 349–376, and 380–409; these read KRVRRIHRALDSDDVELVKLLLNESEITLDD, NALHYAAAYCDSKVVSELLDLRLANLNL, and RGYTALHLAAMRREPAIIMCLLNKGAAVSQ. The interval 439–576 is salicylic acid-binding core (SBC); that stretch reads ESNKDRLCID…FLEDDLPDSP (138 aa). Residue R484 participates in salicylate binding.

Belongs to the plant 'ANKYRIN-BTB/POZ' family. 'NPR1-like' subfamily. In terms of assembly, interacts with NRR. Interacts with TGAL1 and TGAL11.

It localises to the nucleus. Its pathway is protein modification; protein ubiquitination. Salicylic acid (SA)-binding substrate-specific adapter of an E3 ubiquitin-protein ligase complex (CUL3-RBX1-BTB) which mediates the ubiquitination and subsequent proteasomal degradation of target proteins. May be involved in regulating basal defense responses against pathogens, and may be involved in crosstalk between SA- and JA-dependent signaling pathways. Does not seem to be involved in defense response against the bacterial blight disease caused by Xanthomonas oryzae pv. oryzae (Xoo). Over-expression of NPR2/NH2 does not confer disease resistance to Xoo. This is BTB/POZ domain and ankyrin repeat-containing protein NPR2 from Oryza sativa subsp. japonica (Rice).